The primary structure comprises 564 residues: Keratin, type II cytoskeletal 6B (564 aa).

The span at 1–11 (MASTSTTIRSH) shows a compositional bias: low complexity. Residues 1–23 (MASTSTTIRSHSSSRRGFSANSA) are disordered. At A2 the chain carries N-acetylalanine. The segment at 2–162 (ASTSTTIRSH…DPAIQRVRAE (161 aa)) is head. Residues 163–198 (EREQIKTLNNKFASFIDKVRFLEQQNKVLDTKWTLL) are coil 1A. Residues 163–476 (EREQIKTLNN…KLLEGEECRL (314 aa)) enclose the IF rod domain. Positions 199-217 (QEQGTKTVRQNLEPLFEQY) are linker 1. Residues 218–309 (INNLRRQLDN…ALYDAELSQM (92 aa)) form a coil 1B region. The interval 310 to 333 (QTHISDTSVVLSMDNNRNLDLDSI) is linker 12. Residues 334–472 (IAEVKAQYEE…ATYRKLLEGE (139 aa)) are coil 2. The segment at 473–564 (ECRLNGEGVG…SSSSRKSYKH (92 aa)) is tail. Positions 533–564 (RATGGGLSSVGGGSSTIKYTTTSSSSRKSYKH) are disordered. Over residues 534 to 546 (ATGGGLSSVGGGS) the composition is skewed to gly residues. Positions 547–564 (STIKYTTTSSSSRKSYKH) are enriched in low complexity.

Belongs to the intermediate filament family. As to quaternary structure, heterodimer of a type I and a type II keratin. KRT6 isomers associate with KRT16 and/or KRT17. As to expression, constitutively expressed in distinct types of epithelia such as those in oral mucosa, esophagus, papillae of tongue and hair follicle outer root sheath.

This chain is Keratin, type II cytoskeletal 6B (KRT6B), found in Homo sapiens (Human).